A 509-amino-acid polypeptide reads, in one-letter code: tRNA-2-methylthio-N(6)-dimethylallyladenosine synthase (509 aa).

A compositionally biased stretch (polar residues) spans 1–15 (MNEQQRLASQQANAS). Positions 1–22 (MNEQQRLASQQANASTKKEEKD) are disordered. The MTTase N-terminal domain maps to 66–184 (RKFYIRTYGC…LPYILKDAMF (119 aa)). [4Fe-4S] cluster is bound by residues C75, C111, C145, C221, C225, and C228. The Radical SAM core domain occupies 207–437 (RRGDIKAWVN…NELVNEFSAK (231 aa)). In terms of domain architecture, TRAM spans 440 to 503 (KKYEGQIVEV…TWSLNGELVE (64 aa)).

This sequence belongs to the methylthiotransferase family. MiaB subfamily. Monomer. The cofactor is [4Fe-4S] cluster.

The protein localises to the cytoplasm. It catalyses the reaction N(6)-dimethylallyladenosine(37) in tRNA + (sulfur carrier)-SH + AH2 + 2 S-adenosyl-L-methionine = 2-methylsulfanyl-N(6)-dimethylallyladenosine(37) in tRNA + (sulfur carrier)-H + 5'-deoxyadenosine + L-methionine + A + S-adenosyl-L-homocysteine + 2 H(+). Functionally, catalyzes the methylthiolation of N6-(dimethylallyl)adenosine (i(6)A), leading to the formation of 2-methylthio-N6-(dimethylallyl)adenosine (ms(2)i(6)A) at position 37 in tRNAs that read codons beginning with uridine. The sequence is that of tRNA-2-methylthio-N(6)-dimethylallyladenosine synthase from Bacillus cytotoxicus (strain DSM 22905 / CIP 110041 / 391-98 / NVH 391-98).